The chain runs to 90 residues: Hypnin-A3 (90 aa).

Its function is as follows. Lectin specific for core(alpha 1-6)fucosylated N-glycans. Inhibits platelet aggregation. In Hypnea japonica (Japanese red alga), this protein is Hypnin-A3.